Reading from the N-terminus, the 184-residue chain is Ribosome-recycling factor (184 aa).

It belongs to the RRF family.

The protein resides in the cytoplasm. Functionally, responsible for the release of ribosomes from messenger RNA at the termination of protein biosynthesis. May increase the efficiency of translation by recycling ribosomes from one round of translation to another. This Hyphomonas neptunium (strain ATCC 15444) protein is Ribosome-recycling factor.